Here is a 121-residue protein sequence, read N- to C-terminus: Apoptin (121 aa).

Disordered regions lie at residues 1–28 and 57–121; these read MNAL…LETP and LRSA…CIRL. The segment covering 58–70 has biased composition (polar residues); it reads RSATADNSESTGF. The segment covering 88-102 has biased composition (basic and acidic residues); the sequence is RSCDPSEYRVSELKE.

It belongs to the gyrovirus apoptin family.

The protein localises to the host nucleus. Its function is as follows. May act as transcriptional regulator. Induces apoptosis in infected cells. Element of infectious replication cycle. This Gallus gallus (Chicken) protein is Apoptin (VP3).